The following is a 535-amino-acid chain: Methylmalonate-semialdehyde/malonate-semialdehyde dehydrogenase [acylating], mitochondrial (535 aa).

Residues 1–32 constitute a mitochondrion transit peptide; it reads MAAAVAAAAAMRSRILQVSSKVNATWYPASSF. N6-acetyllysine; alternate is present on residues K47, K52, K55, and K76. Residues K47, K52, K55, and K76 each carry the N6-succinyllysine; alternate modification. K87 carries the post-translational modification N6-acetyllysine. An N6-acetyllysine; alternate mark is found at K117 and K129. An N6-succinyllysine; alternate mark is found at K117 and K129. 6 residues coordinate NAD(+): A183, F185, K209, E212, R213, and S262. S262 carries the post-translational modification Phosphoserine. At K298 the chain carries N6-acetyllysine. C317 acts as the Nucleophile in catalysis. Residues K330 and K331 each carry the N6-acetyllysine modification. An N6-acetyllysine; alternate mark is found at K364 and K376. Residues K364 and K376 each carry the N6-succinyllysine; alternate modification. S380 is modified (phosphoserine). Position 391 is an N6-succinyllysine (K391). E417 serves as a coordination point for NAD(+). K500 carries the post-translational modification N6-acetyllysine. An N6-succinyllysine modification is found at K517.

The protein belongs to the aldehyde dehydrogenase family. As to quaternary structure, homotetramer. Post-translationally, acetylation of Lys-55; Lys-117 and Lys-331 is observed in liver mitochondria from fasted mice but not from fed mice.

It is found in the mitochondrion. The enzyme catalyses 3-oxopropanoate + NAD(+) + CoA + H2O = hydrogencarbonate + acetyl-CoA + NADH + H(+). It carries out the reaction 2-methyl-3-oxopropanoate + NAD(+) + CoA + H2O = propanoyl-CoA + hydrogencarbonate + NADH + H(+). The catalysed reaction is (R)-2-methyl-3-oxopropanoate + NAD(+) + CoA + H2O = propanoyl-CoA + hydrogencarbonate + NADH + H(+). It catalyses the reaction (S)-2-methyl-3-oxopropanoate + NAD(+) + CoA + H2O = propanoyl-CoA + hydrogencarbonate + NADH + H(+). Malonate and methylmalonate semialdehyde dehydrogenase involved in the catabolism of valine, thymine, and compounds catabolized by way of beta-alanine, including uracil and cytidine. The protein is Methylmalonate-semialdehyde/malonate-semialdehyde dehydrogenase [acylating], mitochondrial of Mus musculus (Mouse).